The sequence spans 652 residues: DNA ligase (652 aa).

Residues 29 to 33 (DSDYD), 78 to 79 (SL), and Glu-107 each bind NAD(+). Lys-109 functions as the N6-AMP-lysine intermediate in the catalytic mechanism. Arg-130, Glu-164, Lys-278, and Lys-302 together coordinate NAD(+). 4 residues coordinate Zn(2+): Cys-395, Cys-398, Cys-413, and Cys-418. The BRCT domain occupies 577–652 (NSDAALFGLT…IEDEDWLRKF (76 aa)).

Belongs to the NAD-dependent DNA ligase family. LigA subfamily. Mg(2+) is required as a cofactor. Mn(2+) serves as cofactor.

The catalysed reaction is NAD(+) + (deoxyribonucleotide)n-3'-hydroxyl + 5'-phospho-(deoxyribonucleotide)m = (deoxyribonucleotide)n+m + AMP + beta-nicotinamide D-nucleotide.. In terms of biological role, DNA ligase that catalyzes the formation of phosphodiester linkages between 5'-phosphoryl and 3'-hydroxyl groups in double-stranded DNA using NAD as a coenzyme and as the energy source for the reaction. It is essential for DNA replication and repair of damaged DNA. The protein is DNA ligase of Streptococcus pyogenes serotype M6 (strain ATCC BAA-946 / MGAS10394).